The primary structure comprises 492 residues: Catalase isozyme 1 (492 aa).

Active-site residues include histidine 65 and asparagine 138. Tyrosine 348 provides a ligand contact to heme.

The protein belongs to the catalase family. Homotetramer. The cofactor is heme. In terms of tissue distribution, scutella, milky endosperm of immature kernels, leaves and epicotyls.

It is found in the peroxisome. It carries out the reaction 2 H2O2 = O2 + 2 H2O. Occurs in almost all aerobically respiring organisms and serves to protect cells from the toxic effects of hydrogen peroxide. The protein is Catalase isozyme 1 (CAT1) of Zea mays (Maize).